Consider the following 275-residue polypeptide: Exosome complex component RRP40 (275 aa).

Ala2 carries the N-acetylalanine modification. Lys151 is covalently cross-linked (Glycyl lysine isopeptide (Lys-Gly) (interchain with G-Cter in SUMO2)).

The protein belongs to the RRP40 family. Component of the RNA exosome core complex (Exo-9), composed of EXOSC1, EXOSC2, EXOSC3, EXOSC4, EXOSC5, EXOSC6, EXOSC7, EXOSC8 and EXOSC9; within the complex interacts with EXOSC5 and EXOSC9. The catalytically inactive RNA exosome core complex (Exo-9) associates with the catalytic subunit EXOSC10/RRP6. Exo-9 may associate with DIS3 to form the nucleolar exosome complex, or DIS3L to form the cytoplasmic exosome complex. Exo-9 is formed by a hexameric base ring consisting of the heterodimers EXOSC4-EXOSC9, EXOSC5-EXOSC8 and EXOSC6-EXOSC7, and a cap ring consisting of EXOSC1, EXOSC2 and EXOSC3. The RNA exosome complex associates with cofactors C1D/RRP47, MPHOSPH6/MPP6 and MTREX/MTR4. Interacts with MPHOSPH6/MPP6; the interaction is direct. Interacts with GTPBP1. Interacts with ZC3HAV1. Interacts with DDX17 only in the presence of ZC3HAV1 in an RNA-independent manner. Interacts with DHX36; this interaction occurs in a RNase-insensitive manner. Interacts with HBS1L isoform 2.

The protein localises to the cytoplasm. Its subcellular location is the nucleus. It is found in the nucleolus. In terms of biological role, non-catalytic component of the RNA exosome complex which has 3'-&gt;5' exoribonuclease activity and participates in a multitude of cellular RNA processing and degradation events. In the nucleus, the RNA exosome complex is involved in proper maturation of stable RNA species such as rRNA, snRNA and snoRNA, in the elimination of RNA processing by-products and non-coding 'pervasive' transcripts, such as antisense RNA species and promoter-upstream transcripts (PROMPTs), and of mRNAs with processing defects, thereby limiting or excluding their export to the cytoplasm. The RNA exosome may be involved in Ig class switch recombination (CSR) and/or Ig variable region somatic hypermutation (SHM) by targeting AICDA deamination activity to transcribed dsDNA substrates. In the cytoplasm, the RNA exosome complex is involved in general mRNA turnover and specifically degrades inherently unstable mRNAs containing AU-rich elements (AREs) within their 3' untranslated regions, and in RNA surveillance pathways, preventing translation of aberrant mRNAs. It seems to be involved in degradation of histone mRNA. The catalytic inactive RNA exosome core complex of 9 subunits (Exo-9) is proposed to play a pivotal role in the binding and presentation of RNA for ribonucleolysis, and to serve as a scaffold for the association with catalytic subunits and accessory proteins or complexes. EXOSC3 as peripheral part of the Exo-9 complex stabilizes the hexameric ring of RNase PH-domain subunits through contacts with EXOSC9 and EXOSC5. This is Exosome complex component RRP40 (EXOSC3) from Bos taurus (Bovine).